The chain runs to 375 residues: Aminomethyltransferase (375 aa).

It belongs to the GcvT family. The glycine cleavage system is composed of four proteins: P, T, L and H.

It catalyses the reaction N(6)-[(R)-S(8)-aminomethyldihydrolipoyl]-L-lysyl-[protein] + (6S)-5,6,7,8-tetrahydrofolate = N(6)-[(R)-dihydrolipoyl]-L-lysyl-[protein] + (6R)-5,10-methylene-5,6,7,8-tetrahydrofolate + NH4(+). In terms of biological role, the glycine cleavage system catalyzes the degradation of glycine. The chain is Aminomethyltransferase from Cupriavidus metallidurans (strain ATCC 43123 / DSM 2839 / NBRC 102507 / CH34) (Ralstonia metallidurans).